The primary structure comprises 472 residues: Putative diacyglycerol O-acyltransferase MT3172 (472 aa).

H139 acts as the Proton acceptor in catalysis. The disordered stretch occupies residues 217–238 (DRRVPPTFDRSAPPGPFQRGLS).

The protein belongs to the long-chain O-acyltransferase family.

The catalysed reaction is an acyl-CoA + a 1,2-diacyl-sn-glycerol = a triacyl-sn-glycerol + CoA. The protein operates within glycerolipid metabolism; triacylglycerol biosynthesis. This chain is Putative diacyglycerol O-acyltransferase MT3172, found in Mycobacterium tuberculosis (strain CDC 1551 / Oshkosh).